We begin with the raw amino-acid sequence, 438 residues long: Aflatoxin cluster transcriptional coactivator aflS (438 aa).

One can recognise an HTH iclR-type domain in the interval 65–134; the sequence is LALYNQLLAC…PSPGHVAHSV (70 aa). Residues 95-114 constitute a DNA-binding region (H-T-H motif); sequence FEDVADIAGVPECRLRRLVR.

As to quaternary structure, interacts with aflR.

The protein resides in the nucleus. Transcription factor; part of the gene cluster that mediates the biosynthesis of aflatoxin, a polyketide-derived furanocoumarin which is part of the most toxic and carcinogenic compounds among the known mycotoxins. AflS exhibits no DNA-binding capability on its own, but forms a complex with the other aflatoxin cluster transcription factor aflR and acts as a modulator of aflR's DNA-binding by decreasing its DNA-binding affinity. The chain is Aflatoxin cluster transcriptional coactivator aflS from Aspergillus flavus (strain ATCC 200026 / FGSC A1120 / IAM 13836 / NRRL 3357 / JCM 12722 / SRRC 167).